A 273-amino-acid chain; its full sequence is Release factor glutamine methyltransferase (273 aa).

S-adenosyl-L-methionine-binding positions include 109–113 (GTGSG), D132, W159, and N176. 176-179 (NPPY) is a substrate binding site.

The protein belongs to the protein N5-glutamine methyltransferase family. PrmC subfamily.

It catalyses the reaction L-glutaminyl-[peptide chain release factor] + S-adenosyl-L-methionine = N(5)-methyl-L-glutaminyl-[peptide chain release factor] + S-adenosyl-L-homocysteine + H(+). In terms of biological role, methylates the class 1 translation termination release factors RF1/PrfA and RF2/PrfB on the glutamine residue of the universally conserved GGQ motif. The protein is Release factor glutamine methyltransferase of Neisseria gonorrhoeae (strain ATCC 700825 / FA 1090).